The chain runs to 96 residues: Essential MCU regulator, mitochondrial (96 aa).

The N-terminal 34 residues, 1–34 (MIVSRLTFPLQAAKLVARKAAGNPSNSIIQRRHM), are a transit peptide targeting the mitochondrion. Residues 52–72 (PFGLFAIFCAVIPGLFIGATI) traverse the membrane as a helical segment.

This sequence belongs to the SMDT1/EMRE family.

Its subcellular location is the mitochondrion inner membrane. Essential regulatory subunit of the mitochondrial calcium uniporter (mcu) channel, a protein that mediates calcium uptake into mitochondria. This Drosophila pseudoobscura pseudoobscura (Fruit fly) protein is Essential MCU regulator, mitochondrial.